We begin with the raw amino-acid sequence, 643 residues long: Extracellular metalloproteinase 4 (643 aa).

The N-terminal stretch at 1–18 is a signal peptide; the sequence is MHGLLLAGLLALPLNVLA. Positions 19–254 are excised as a propeptide; that stretch reads HPTESHSSGI…VHSVVDYVSA (236 aa). Positions 47–57 are enriched in basic and acidic residues; it reads TKSDAVPKQDD. The segment at 47–71 is disordered; that stretch reads TKSDAVPKQDDESFTTSSTGDDNVS. Residues 60 to 71 show a composition bias toward polar residues; the sequence is FTTSSTGDDNVS. 2 N-linked (GlcNAc...) asparagine glycosylation sites follow: N271 and N420. Residue H437 participates in Zn(2+) binding. The active site involves E438. H441 contacts Zn(2+). A glycan (N-linked (GlcNAc...) asparagine) is linked at N510.

Belongs to the peptidase M36 family. It depends on Zn(2+) as a cofactor.

The protein localises to the secreted. Functionally, secreted metalloproteinase probably acting as a virulence factor. The protein is Extracellular metalloproteinase 4 (MEP4) of Trichophyton equinum (Horse ringworm fungus).